The following is a 406-amino-acid chain: Diaminopimelate decarboxylase (406 aa).

Lysine 52 bears the N6-(pyridoxal phosphate)lysine mark. Residues glycine 231 and glutamate 265–arginine 268 contribute to the pyridoxal 5'-phosphate site. Residues arginine 268, arginine 304, and tyrosine 308 each coordinate substrate. Cysteine 334 serves as the catalytic Proton donor. Residues glutamate 335 and tyrosine 362 each coordinate substrate. Tyrosine 362 contacts pyridoxal 5'-phosphate.

It belongs to the Orn/Lys/Arg decarboxylase class-II family. LysA subfamily. In terms of assembly, homodimer. Requires pyridoxal 5'-phosphate as cofactor.

It catalyses the reaction meso-2,6-diaminopimelate + H(+) = L-lysine + CO2. It functions in the pathway amino-acid biosynthesis; L-lysine biosynthesis via DAP pathway; L-lysine from DL-2,6-diaminopimelate: step 1/1. Functionally, specifically catalyzes the decarboxylation of meso-diaminopimelate (meso-DAP) to L-lysine. The protein is Diaminopimelate decarboxylase of Neisseria meningitidis serogroup A / serotype 4A (strain DSM 15465 / Z2491).